Consider the following 379-residue polypeptide: Queuine tRNA-ribosyltransferase (379 aa).

The Proton acceptor role is filled by D94. Substrate contacts are provided by residues 94 to 98 (DSGGF), D148, Q191, and G218. The tract at residues 249 to 255 (GVGSPDS) is RNA binding. D268 acts as the Nucleophile in catalysis. Residues 273-277 (TRIAR) are RNA binding; important for wobble base 34 recognition. Zn(2+) is bound by residues C306, C308, C311, and H337.

The protein belongs to the queuine tRNA-ribosyltransferase family. In terms of assembly, homodimer. Within each dimer, one monomer is responsible for RNA recognition and catalysis, while the other monomer binds to the replacement base PreQ1. Zn(2+) is required as a cofactor.

It carries out the reaction 7-aminomethyl-7-carbaguanine + guanosine(34) in tRNA = 7-aminomethyl-7-carbaguanosine(34) in tRNA + guanine. It functions in the pathway tRNA modification; tRNA-queuosine biosynthesis. In terms of biological role, catalyzes the base-exchange of a guanine (G) residue with the queuine precursor 7-aminomethyl-7-deazaguanine (PreQ1) at position 34 (anticodon wobble position) in tRNAs with GU(N) anticodons (tRNA-Asp, -Asn, -His and -Tyr). Catalysis occurs through a double-displacement mechanism. The nucleophile active site attacks the C1' of nucleotide 34 to detach the guanine base from the RNA, forming a covalent enzyme-RNA intermediate. The proton acceptor active site deprotonates the incoming PreQ1, allowing a nucleophilic attack on the C1' of the ribose to form the product. After dissociation, two additional enzymatic reactions on the tRNA convert PreQ1 to queuine (Q), resulting in the hypermodified nucleoside queuosine (7-(((4,5-cis-dihydroxy-2-cyclopenten-1-yl)amino)methyl)-7-deazaguanosine). In Listeria monocytogenes serovar 1/2a (strain ATCC BAA-679 / EGD-e), this protein is Queuine tRNA-ribosyltransferase.